A 137-amino-acid polypeptide reads, in one-letter code: Type 3 secretion system pilotin (137 aa).

The N-terminal stretch at 1 to 14 (MLLPLALLLGGCVS) is a signal peptide.

Belongs to the ExsB/YscW family.

The protein resides in the cell outer membrane. In terms of biological role, involved in the synthesis of the type III secretion system (T3SS), also called injectisome, which is used to inject bacterial effector proteins into eukaryotic host cells. Pilot protein that is required for the proper localization of the secretin PscC in the outer membrane. Necessary for full in vivo virulence. The protein is Type 3 secretion system pilotin of Pseudomonas aeruginosa (strain ATCC 15692 / DSM 22644 / CIP 104116 / JCM 14847 / LMG 12228 / 1C / PRS 101 / PAO1).